The chain runs to 76 residues: High-potential iron-sulfur protein isozyme 2 (76 aa).

The [4Fe-4S] cluster site is built by cysteine 38, cysteine 41, cysteine 54, and cysteine 70.

It belongs to the high-potential iron-sulfur protein (HiPIP) family. In terms of assembly, homodimer.

Its function is as follows. Specific class of high-redox-potential 4Fe-4S ferredoxins. Functions in anaerobic electron transport in most purple and in some other photosynthetic bacteria and in at least one genus (Paracoccus) of halophilic, denitrifying bacteria. In Halorhodospira halophila (Ectothiorhodospira halophila), this protein is High-potential iron-sulfur protein isozyme 2 (hip2).